Reading from the N-terminus, the 474-residue chain is Aspartyl/glutamyl-tRNA(Asn/Gln) amidotransferase subunit B (474 aa).

This sequence belongs to the GatB/GatE family. GatB subfamily. Heterotrimer of A, B and C subunits.

The enzyme catalyses L-glutamyl-tRNA(Gln) + L-glutamine + ATP + H2O = L-glutaminyl-tRNA(Gln) + L-glutamate + ADP + phosphate + H(+). It catalyses the reaction L-aspartyl-tRNA(Asn) + L-glutamine + ATP + H2O = L-asparaginyl-tRNA(Asn) + L-glutamate + ADP + phosphate + 2 H(+). Its function is as follows. Allows the formation of correctly charged Asn-tRNA(Asn) or Gln-tRNA(Gln) through the transamidation of misacylated Asp-tRNA(Asn) or Glu-tRNA(Gln) in organisms which lack either or both of asparaginyl-tRNA or glutaminyl-tRNA synthetases. The reaction takes place in the presence of glutamine and ATP through an activated phospho-Asp-tRNA(Asn) or phospho-Glu-tRNA(Gln). The sequence is that of Aspartyl/glutamyl-tRNA(Asn/Gln) amidotransferase subunit B from Desulfotalea psychrophila (strain LSv54 / DSM 12343).